Here is a 197-residue protein sequence, read N- to C-terminus: Small ribosomal subunit protein uS4 (197 aa).

In terms of domain architecture, S4 RNA-binding spans 94 to 158 (RRLDNVIYRF…LKKYLYDYKN (65 aa)).

The protein belongs to the universal ribosomal protein uS4 family. As to quaternary structure, part of the 30S ribosomal subunit. Contacts protein S5. The interaction surface between S4 and S5 is involved in control of translational fidelity.

Functionally, one of the primary rRNA binding proteins, it binds directly to 16S rRNA where it nucleates assembly of the body of the 30S subunit. In terms of biological role, with S5 and S12 plays an important role in translational accuracy. This is Small ribosomal subunit protein uS4 (rpsD) from Carsonella ruddii (strain PV).